Reading from the N-terminus, the 464-residue chain is ATP synthase subunit beta (464 aa).

153-160 (GGAGVGKT) is a binding site for ATP.

Belongs to the ATPase alpha/beta chains family. As to quaternary structure, F-type ATPases have 2 components, CF(1) - the catalytic core - and CF(0) - the membrane proton channel. CF(1) has five subunits: alpha(3), beta(3), gamma(1), delta(1), epsilon(1). CF(0) has three main subunits: a(1), b(2) and c(9-12). The alpha and beta chains form an alternating ring which encloses part of the gamma chain. CF(1) is attached to CF(0) by a central stalk formed by the gamma and epsilon chains, while a peripheral stalk is formed by the delta and b chains.

It localises to the cell membrane. The catalysed reaction is ATP + H2O + 4 H(+)(in) = ADP + phosphate + 5 H(+)(out). In terms of biological role, produces ATP from ADP in the presence of a proton gradient across the membrane. The catalytic sites are hosted primarily by the beta subunits. In Acetivibrio thermocellus (strain ATCC 27405 / DSM 1237 / JCM 9322 / NBRC 103400 / NCIMB 10682 / NRRL B-4536 / VPI 7372) (Clostridium thermocellum), this protein is ATP synthase subunit beta.